Consider the following 476-residue polypeptide: Aspartate kinase Ask_Ect (476 aa).

Residues 405–476 form the ACT domain; it reads SAIGSDLKVK…ENHGDVIAAA (72 aa).

It belongs to the aspartokinase family. Monomer.

The protein localises to the cytoplasm. It carries out the reaction L-aspartate + ATP = 4-phospho-L-aspartate + ADP. The protein operates within amine and polyamine biosynthesis; ectoine biosynthesis. With respect to regulation, allosterically and strongly feedback inhibited by tryptophan. The presence of either 650 mM NaCl or KCl reduces the inhibition by tryptophan. Involved in the biosynthesis of L-aspartate-beta-semialdehyde, which is an intermediate in the biosynthesis of ectoine, a highly soluble organic osmolyte, called compatible solute. Ectoine is used to avoid excessive water efflux, plasmolysis, molecular crowding of the cytoplasm, and cessation of growth in high salinity environments. Catalyzes the phosphorylation of the beta-carboxyl group of L-aspartate to yield 4-phospho-L-aspartate. The polypeptide is Aspartate kinase Ask_Ect (ask) (Stutzerimonas stutzeri (strain A1501) (Pseudomonas stutzeri)).